The chain runs to 371 residues: Bifunctional chorismate mutase/prephenate dehydratase (371 aa).

Residues 1 to 92 form the Chorismate mutase domain; the sequence is MTLKNALLAF…DSVLTQKKWI (92 aa). Positions 11, 28, 39, 48, 52, 84, and 88 each coordinate substrate. The Prephenate dehydratase domain occupies 104-284; sequence KISFLGSFGS…NITQFIILAQ (181 aa). The regulatory stretch occupies residues 285–371; that stretch reads KKTYITNKKT…IKCIKILGCF (87 aa).

It is found in the cytoplasm. It carries out the reaction chorismate = prephenate. It catalyses the reaction prephenate + H(+) = 3-phenylpyruvate + CO2 + H2O. Its pathway is amino-acid biosynthesis; L-phenylalanine biosynthesis; phenylpyruvate from prephenate: step 1/1. It participates in metabolic intermediate biosynthesis; prephenate biosynthesis; prephenate from chorismate: step 1/1. In terms of biological role, catalyzes the Claisen rearrangement of chorismate to prephenate and the decarboxylation/dehydration of prephenate to phenylpyruvate. This chain is Bifunctional chorismate mutase/prephenate dehydratase (pheA), found in Buchnera aphidicola subsp. Baizongia pistaciae (strain Bp).